A 721-amino-acid chain; its full sequence is MSDFTKQTITEVISKEERPIPAAILAKKVLEKIPTLNKTDVYKLIDLLIQENTIKKLENNRLVIGYLDYEFDHEIKQGIITINSKGDGFIKEDNTEIEYYVNKKYLNGALKKDSVKFVKLKKEPKNNLQDAAVIEIVGHAKDHYVGQFITLPNGGYYIFVDDPLFYLNINLKDTTGLVNGHKILFKIISQTTKDAIAELVHIIGHKNDVGSDVLSIVYDNGIDPTFDPQVVDLASKLEFYVDEHQNKIRRSIIDREIISIDPVGSKDIDDAVYVKKLNDQRYFLGISIADVSFYVQPNTILDADAFKRGTSTYLVDRVIPMLPHNISNNICSLNEGEFRMCITCDMVIDKDGKICWKDVYPAIMKNYRQMSYDEVNDFYEGKSRFESATLTMKEMLLEAKELHHILRNKKIKDGYVDFDIKEPKIILDETGVPIDIKIYERKTAQMMVEDFMIAANEAVTMFAEEHMDKTLKEFNLEMPFIYRVHDKPSIINLQKFEIEAKKLSFNISHDFENIQPNTISNWLKMNDNHVNLPLISKLLLRSMAKASYEIINTGHFGLASDNYTHFTSPIRRYPDLIVHRLLWMFIFDSQSYTDKQRVELVNKLKLITEESNKNEIIAVKTERDVNAAKFAEYMNLHIGKEFIGVVTTVSSFGVFVELENTIEGLIRIKNLKDDFYDFIPENMTLVGQKRKKIITVGNKVRVRVIEANKLTRKIDFELVAQ.

Residues 249-587 enclose the RNB domain; sequence RRSIIDREII…VHRLLWMFIF (339 aa). The S1 motif domain occupies 639-719; the sequence is GKEFIGVVTT…LTRKIDFELV (81 aa).

The protein belongs to the RNR ribonuclease family. RNase R subfamily.

The protein localises to the cytoplasm. The catalysed reaction is Exonucleolytic cleavage in the 3'- to 5'-direction to yield nucleoside 5'-phosphates.. In terms of biological role, 3'-5' exoribonuclease that releases 5'-nucleoside monophosphates and is involved in maturation of structured RNAs. In Ureaplasma parvum serovar 3 (strain ATCC 700970), this protein is Ribonuclease R.